We begin with the raw amino-acid sequence, 227 residues long: 3,4-dihydroxy-2-butanone 4-phosphate synthase (227 aa).

D-ribulose 5-phosphate contacts are provided by residues 45–46, Asp-50, 158–162, and Glu-182; these read RE and RRGHT. Glu-46 provides a ligand contact to Mg(2+). Position 161 (His-161) interacts with Mg(2+).

The protein belongs to the DHBP synthase family. Homodimer. Requires Mg(2+) as cofactor. Mn(2+) serves as cofactor.

It catalyses the reaction D-ribulose 5-phosphate = (2S)-2-hydroxy-3-oxobutyl phosphate + formate + H(+). The protein operates within cofactor biosynthesis; riboflavin biosynthesis; 2-hydroxy-3-oxobutyl phosphate from D-ribulose 5-phosphate: step 1/1. Functionally, catalyzes the conversion of D-ribulose 5-phosphate to formate and 3,4-dihydroxy-2-butanone 4-phosphate. The chain is 3,4-dihydroxy-2-butanone 4-phosphate synthase from Ralstonia nicotianae (strain ATCC BAA-1114 / GMI1000) (Ralstonia solanacearum).